The following is a 207-amino-acid chain: Ribonuclease HII (207 aa).

The 189-residue stretch at 18–206 (EFIVGVDEVG…VKNILQLLEK (189 aa)) folds into the RNase H type-2 domain. Residues Asp-24, Glu-25, and Asp-115 each contribute to the a divalent metal cation site.

Belongs to the RNase HII family. The cofactor is Mn(2+). Mg(2+) serves as cofactor.

The protein resides in the cytoplasm. The enzyme catalyses Endonucleolytic cleavage to 5'-phosphomonoester.. Its function is as follows. Endonuclease that specifically degrades the RNA of RNA-DNA hybrids. The sequence is that of Ribonuclease HII from Hydrogenovibrio crunogenus (strain DSM 25203 / XCL-2) (Thiomicrospira crunogena).